The chain runs to 202 residues: Small ribosomal subunit protein uS4 (202 aa).

The segment at 16 to 43 (GELPGLSRKTPRRAYPPGQHGQGRRKRS) is disordered. The S4 RNA-binding domain maps to 90 to 152 (MRLDNTVFRL…DNSRRMVETN (63 aa)).

Belongs to the universal ribosomal protein uS4 family. Part of the 30S ribosomal subunit. Contacts protein S5. The interaction surface between S4 and S5 is involved in control of translational fidelity.

Its function is as follows. One of the primary rRNA binding proteins, it binds directly to 16S rRNA where it nucleates assembly of the body of the 30S subunit. In terms of biological role, with S5 and S12 plays an important role in translational accuracy. This Crocosphaera subtropica (strain ATCC 51142 / BH68) (Cyanothece sp. (strain ATCC 51142)) protein is Small ribosomal subunit protein uS4.